We begin with the raw amino-acid sequence, 210 residues long: Probable GTP-binding protein EngB (210 aa).

The EngB-type G domain occupies phenylalanine 22 to glutamate 198. Residues glycine 30 to serine 37, glycine 57 to leucine 61, aspartate 75 to glycine 78, threonine 142 to aspartate 145, and threonine 177 to serine 179 contribute to the GTP site. Residues serine 37 and threonine 59 each coordinate Mg(2+).

This sequence belongs to the TRAFAC class TrmE-Era-EngA-EngB-Septin-like GTPase superfamily. EngB GTPase family. Mg(2+) is required as a cofactor.

Functionally, necessary for normal cell division and for the maintenance of normal septation. The chain is Probable GTP-binding protein EngB from Flavobacterium johnsoniae (strain ATCC 17061 / DSM 2064 / JCM 8514 / BCRC 14874 / CCUG 350202 / NBRC 14942 / NCIMB 11054 / UW101) (Cytophaga johnsonae).